Consider the following 2648-residue polypeptide: E3 ubiquitin-protein ligase hecd-1 (2648 aa).

2 ANK repeats span residues 374–403 (VGQSLTNWASAFGSIEMVQYLCDKGSDVNK) and 405–434 (HKSSSLHYAACFGRPDVVKLLLQRGANPDL). The segment covering 433–455 (DLRDEDGKTALDKARERSDDDHN) has biased composition (basic and acidic residues). 3 disordered regions span residues 433 to 494 (DLRD…ELPN), 645 to 714 (PMEI…KATA), and 1376 to 1400 (DPPKKDSPAGTSSTPGSSSSAALPP). 3 stretches are compositionally biased toward polar residues: residues 478–489 (ASTSKQPGTSTK), 652–661 (NQPSSSTAVP), and 670–688 (TVPSSSGGADAESNSNPST). Composition is skewed to low complexity over residues 696–714 (SSTPSSSTQQSISKPKATA) and 1383–1400 (PAGTSSTPGSSSSAALPP). Residues 1438 to 1510 (RSRGSYKISE…NFDIERVTST (73 aa)) form the MIB/HERC2 domain. Disordered regions lie at residues 1538 to 1562 (YTPKTTGGPPSSSVFGTSSSAGSSR), 1575 to 1629 (KNTT…SLQH), 1652 to 1796 (NQEP…LLGG), and 1811 to 1836 (ESLSDASSSAKDATTNEAQKKGGKKP). 2 stretches are compositionally biased toward low complexity: residues 1543 to 1562 (TGGPPSSSVFGTSSSAGSSR) and 1575 to 1586 (KNTTPAGTPSSG). Residues 1610–1629 (TSGPSVASTGQAASAESLQH) show a composition bias toward polar residues. Acidic residues predominate over residues 1653–1666 (QEPEDEPMGGEESD). Residues 1667 to 1696 (SAASMRSAASSNSQMSMGSSSQQQQQQDSD) are compositionally biased toward low complexity. 2 stretches are compositionally biased toward acidic residues: residues 1736-1746 (TDGDADADETN) and 1756-1783 (DAMEEDDEEEETMEDEEDDDDDDDDESS). The segment covering 1812–1823 (SLSDASSSAKDA) has biased composition (low complexity). Residues 2240 to 2648 (FHADRKAVLE…AINEKGFHLN (409 aa)) form the HECT domain. Cysteine 2617 functions as the Glycyl thioester intermediate in the catalytic mechanism.

Belongs to the UPL family. K-HECT subfamily. In terms of tissue distribution, expressed in most tissues, including hypodermis, muscle, intestine, vulva, and neurons.

The enzyme catalyses S-ubiquitinyl-[E2 ubiquitin-conjugating enzyme]-L-cysteine + [acceptor protein]-L-lysine = [E2 ubiquitin-conjugating enzyme]-L-cysteine + N(6)-ubiquitinyl-[acceptor protein]-L-lysine.. The protein operates within protein modification; protein ubiquitination. E3 ubiquitin-protein ligase which accepts ubiquitin from an E2 ubiquitin-conjugating enzyme in the form of a thioester and then directly transfers the ubiquitin to targeted substrates. Involved in the ubiquitination and proteasomal-mediated degradation of cytoplasmic and mitochondrial proteins. Positively regulates lin-12 activity in the anchor cell (AC)/vulval precursor (VU) cell fate decision. Negatively regulates glp-1 activity in germline proliferation. May play a role in the formation of fibrous organelles, a hemidesmosome-like structure attaching muscles to the epidermis. Regulates germline DNA double-strand-break repair and apoptosis in response to DNA damage by recruiting E4 ubiquitin-protein ligase ufd-2 to DNA repair foci. The polypeptide is E3 ubiquitin-protein ligase hecd-1 (Caenorhabditis elegans).